We begin with the raw amino-acid sequence, 60 residues long: MDHRLLEIVACPVCNGKFYYNKERQELICKSDALAYPLCDGIPVLLESEARAIKLDETNS.

Belongs to the UPF0434 family.

This is UPF0434 protein SG0997 from Sodalis glossinidius (strain morsitans).